A 106-amino-acid polypeptide reads, in one-letter code: Replication restart protein PriB (106 aa).

The 100-residue stretch at 4–103 (MNRLVLSGTV…LHAEQIELID (100 aa)) folds into the SSB domain.

This sequence belongs to the PriB family. In terms of assembly, homodimer. Interacts with PriA and DnaT. Component of the replication restart primosome. Primosome assembly occurs via a 'hand-off' mechanism. PriA binds to replication forks, subsequently PriB then DnaT bind; DnaT then displaces ssDNA to generate the helicase loading substrate.

Functionally, involved in the restart of stalled replication forks, which reloads the replicative helicase on sites other than the origin of replication; the PriA-PriB pathway is the major replication restart pathway. During primosome assembly it facilitates complex formation between PriA and DnaT on DNA; stabilizes PriA on DNA. Stimulates the DNA unwinding activity of PriA helicase. The sequence is that of Replication restart protein PriB from Pectobacterium atrosepticum (strain SCRI 1043 / ATCC BAA-672) (Erwinia carotovora subsp. atroseptica).